The sequence spans 370 residues: MEHNILVINPGSTSDDIGYYKGPKTVFEESARYSQEELDSFAGKELSEQIPLRRKFLLDVLKKHEINLNEIDAVIGRGGLLKHIEGGIYTINEAMLADLKRGYNGHHPSNLGGILAREIAESLGKPCFIADPVVVDEMEPLARYTGFKEIKRKSIFHALNQKRVAITAAKELGKKYKECNFIVMHGGGGVSVGAHKKGKVIDVSDGFEGAGPMTPQRSGVLPSLELVEMCFSGQYTIQELRKKMRGRGGMIAHTGTSDIADLYNYISSGKKKPGSTINCSREAAQEAFDAMIYQISKEIGAMATVLKGDVDAIILTGGLAYNEYLVNMIKERTGFITDKFFVYPGGDEKAALKEAAARALENPEIIKQYK.

This sequence belongs to the acetokinase family.

The protein localises to the cytoplasm. It carries out the reaction butanoate + ATP = butanoyl phosphate + ADP. This is Probable butyrate kinase from Elusimicrobium minutum (strain Pei191).